The sequence spans 270 residues: tRNA pseudouridine synthase A (270 aa).

The Nucleophile role is filled by Asp54. Substrate is bound at residue Tyr112.

Belongs to the tRNA pseudouridine synthase TruA family. Homodimer.

It catalyses the reaction uridine(38/39/40) in tRNA = pseudouridine(38/39/40) in tRNA. Its function is as follows. Formation of pseudouridine at positions 38, 39 and 40 in the anticodon stem and loop of transfer RNAs. This chain is tRNA pseudouridine synthase A, found in Bordetella bronchiseptica (strain ATCC BAA-588 / NCTC 13252 / RB50) (Alcaligenes bronchisepticus).